Reading from the N-terminus, the 141-residue chain is Large ribosomal subunit protein uL11 (141 aa).

It belongs to the universal ribosomal protein uL11 family. As to quaternary structure, part of the ribosomal stalk of the 50S ribosomal subunit. Interacts with L10 and the large rRNA to form the base of the stalk. L10 forms an elongated spine to which L12 dimers bind in a sequential fashion forming a multimeric L10(L12)X complex. In terms of processing, one or more lysine residues are methylated.

Forms part of the ribosomal stalk which helps the ribosome interact with GTP-bound translation factors. The protein is Large ribosomal subunit protein uL11 of Streptococcus gordonii (strain Challis / ATCC 35105 / BCRC 15272 / CH1 / DL1 / V288).